Here is a 689-residue protein sequence, read N- to C-terminus: Polyribonucleotide nucleotidyltransferase (689 aa).

The Mg(2+) site is built by D482 and D488. The region spanning 549-608 (PRMITLTIPQNKIGELIGPGGKNIRKIQEDNNVKIDIEETGRVFISGVESDGVKSAKEYV) is the KH domain. Residues 618–686 (GKIYKSRVTK…KQGRINLSIK (69 aa)) enclose the S1 motif domain.

It belongs to the polyribonucleotide nucleotidyltransferase family. The cofactor is Mg(2+).

The protein localises to the cytoplasm. It carries out the reaction RNA(n+1) + phosphate = RNA(n) + a ribonucleoside 5'-diphosphate. Involved in mRNA degradation. Catalyzes the phosphorolysis of single-stranded polyribonucleotides processively in the 3'- to 5'-direction. This Endomicrobium trichonymphae protein is Polyribonucleotide nucleotidyltransferase.